We begin with the raw amino-acid sequence, 776 residues long: 5-methyltetrahydropteroyltriglutamate--homocysteine methyltransferase (776 aa).

Residues 16–19 (RELK) and Lys112 each bind 5-methyltetrahydropteroyltri-L-glutamate. Residues 432–434 (IGS) and Glu485 each bind L-homocysteine. Residues 432-434 (IGS) and Glu485 contribute to the L-methionine site. 5-methyltetrahydropteroyltri-L-glutamate is bound by residues 516–517 (RC) and Trp562. Asp600 provides a ligand contact to L-homocysteine. Asp600 serves as a coordination point for L-methionine. Residue Glu606 participates in 5-methyltetrahydropteroyltri-L-glutamate binding. Residues His642, Cys644, and Glu666 each contribute to the Zn(2+) site. The Proton donor role is filled by His695. Cys727 is a Zn(2+) binding site. Positions 755–776 (HAGAVHAGTPATRAEHAESALA) are disordered. Basic and acidic residues predominate over residues 767-776 (RAEHAESALA).

This sequence belongs to the vitamin-B12 independent methionine synthase family. It depends on Zn(2+) as a cofactor.

It carries out the reaction 5-methyltetrahydropteroyltri-L-glutamate + L-homocysteine = tetrahydropteroyltri-L-glutamate + L-methionine. Its pathway is amino-acid biosynthesis; L-methionine biosynthesis via de novo pathway; L-methionine from L-homocysteine (MetE route): step 1/1. In terms of biological role, catalyzes the transfer of a methyl group from 5-methyltetrahydrofolate to homocysteine resulting in methionine formation. This chain is 5-methyltetrahydropteroyltriglutamate--homocysteine methyltransferase, found in Ralstonia nicotianae (strain ATCC BAA-1114 / GMI1000) (Ralstonia solanacearum).